The chain runs to 213 residues: Thymidylate kinase (213 aa).

10-17 (GLEGAGKT) contributes to the ATP binding site.

Belongs to the thymidylate kinase family.

It catalyses the reaction dTMP + ATP = dTDP + ADP. In terms of biological role, phosphorylation of dTMP to form dTDP in both de novo and salvage pathways of dTTP synthesis. This chain is Thymidylate kinase, found in Salmonella dublin (strain CT_02021853).